Reading from the N-terminus, the 406-residue chain is Testis-specific Y-encoded-like protein 5 (406 aa).

Residues 1-25 are compositionally biased toward basic residues; it reads MSGRSRGRKSSRAKGRGKGRARARV. 3 disordered regions span residues 1 to 67, 132 to 164, and 382 to 406; these read MSGR…PAEL, IGNR…PKMA, and RGEK…RQPN. Residues 27–38 are compositionally biased toward basic and acidic residues; the sequence is AAAEDAWHDEKP. Residues 49-62 show a composition bias toward low complexity; that stretch reads AAAQVQAGAAQGGA. Positions 382–392 are enriched in basic and acidic residues; sequence RGEKGKEERPG.

This sequence belongs to the nucleosome assembly protein (NAP) family. As to quaternary structure, interacts with USP7.

Its function is as follows. Involved in modulation of cell growth and cellular response to gamma radiation probably via regulation of the Akt signaling pathway. Involved in regulation of p53/TP53. Suppresses p53/TP53 protein levels and promotes its ubiquitination; the function is dependent on USP7 and independent on MDM2. Proposed to displace p53/TP53 from interaction with USP7. The protein is Testis-specific Y-encoded-like protein 5 (Tspyl5) of Mus musculus (Mouse).